The primary structure comprises 109 residues: Large ribosomal subunit protein eL42 (109 aa).

Residues 23–53 (VSQYKKSKESTHAQGRRRYDMKQSGFGGQTK) are disordered. Residues 28 to 43 (KSKESTHAQGRRRYDM) show a composition bias toward basic and acidic residues.

Belongs to the eukaryotic ribosomal protein eL42 family.

Its subcellular location is the cytoplasm. The sequence is that of Large ribosomal subunit protein eL42 (RPL36A) from Tetrahymena thermophila (strain SB210).